A 2212-amino-acid polypeptide reads, in one-letter code: Voltage-dependent P/Q-type calcium channel subunit alpha-1A (2212 aa).

At 1-100 the chain is on the cytoplasmic side; the sequence is MARFGDEMPG…KYAKKITEWP (100 aa). Residues 87-365 form an I repeat; the sequence is NVVRKYAKKI…LVLGVLSGEF (279 aa). The helical transmembrane segment at 101–119 threads the bilayer; that stretch reads PFEYMILATIIANCIVLAL. Residues 120-138 are Extracellular-facing; that stretch reads EQHLPDDDKTPMSERLDDT. A helical transmembrane segment spans residues 139–156; that stretch reads EPYFIGIFCFEAGIKIVA. The Cytoplasmic segment spans residues 157 to 168; the sequence is LGFAFHKGSYLR. Residues 169 to 184 traverse the membrane as a helical segment; that stretch reads NGWNVMDFVVVLTGIL. Residues 185 to 192 are Extracellular-facing; the sequence is ATVGTEFD. Residues 193-211 traverse the membrane as a helical segment; that stretch reads LRTLRAVRVLRPLKLVSGI. Topologically, residues 212-230 are cytoplasmic; that stretch reads PSLQVVLKSIMKAMIPLLQ. The helical transmembrane segment at 231–250 threads the bilayer; the sequence is IGLLLFFAILIFAIIGLEFY. Topologically, residues 251–337 are extracellular; that stretch reads MGKFHTTCFE…NSNDASGNTW (87 aa). A glycan (N-linked (GlcNAc...) asparagine) is linked at N285. E320 provides a ligand contact to Ca(2+). Residues 338–362 traverse the membrane as a helical segment; it reads NWLYFIPLIIIGSFFMLNLVLGVLS. At 363–489 the chain is on the cytoplasmic side; that stretch reads GEFAKERERV…FYIRRMVKTQ (127 aa). A binding to the beta subunit region spans residues 385 to 402; that stretch reads QQIERELNGYMEWISKAE. T411 bears the Phosphothreonine mark. Phosphoserine is present on residues S450 and S453. The stretch at 475 to 719 is one II repeat; it reads ERRMRFYIRR…VFLAIAVDNL (245 aa). Residues 490 to 509 form a helical membrane-spanning segment; the sequence is AFYWTVLSLVALNTLWLAIV. The Extracellular segment spans residues 510 to 523; that stretch reads HYNQPEWLSDFLYY. A helical transmembrane segment spans residues 524–543; sequence AEFIFLGLFMSEMFIKMYGL. Over 544–551 the chain is Cytoplasmic; the sequence is GTRPYFHS. Residues 552–570 form a helical membrane-spanning segment; that stretch reads SFNCFDCGVIIGSIFEVIW. Topologically, residues 571 to 580 are extracellular; that stretch reads AVIKPGTSFG. A helical membrane pass occupies residues 581 to 599; it reads ISVLRALRLLRIFKVTKYW. The Cytoplasmic portion of the chain corresponds to 600–618; sequence ASLRNLVVSLLNSMKSIIS. The chain crosses the membrane as a helical span at residues 619–638; that stretch reads LLFLLFLFIVVFALLGMQLF. Residues 639-691 lie on the Extracellular side of the membrane; sequence GGQFNFDEGTPPTNFDTFPAAIMTVFQILTGEDWNEVMYDEIKSQGGVQGGMV. E670 serves as a coordination point for Ca(2+). A helical membrane pass occupies residues 692 to 716; the sequence is FSIYFIVLTLFGNYTLLNVFLAIAV. Over 717 to 1190 the chain is Cytoplasmic; it reads DNLANAQELT…TNPLRRLCHY (474 aa). S752, S755, and S792 each carry phosphoserine. 4 stretches are compositionally biased toward basic and acidic residues: residues 814 to 824, 850 to 862, 871 to 924, and 932 to 958; these read PDVKTHLDRPL, RPRESARDPDARR, APGR…EGEP, and RPGDEPDDRPERRPRPRDATRPARAAD. Disordered regions lie at residues 814 to 1117 and 1137 to 1170; these read PDVK…RKPE and VNKNANPDPLPKKEEEKKEEEEADPGEDGPKPMP. Phosphoserine is present on residues S1038, S1042, and S1051. Positions 1056-1073 are enriched in polar residues; that stretch reads GNSTNPGPALATNPQNAA. A compositionally biased stretch (low complexity) spans 1074-1083; it reads SRRTPNNPGN. Polar residues predominate over residues 1094–1111; the sequence is ENSLIVTNPSSTQPNSAK. Residues 1153–1163 are compositionally biased toward acidic residues; the sequence is KKEEEEADPGE. One copy of the III repeat lies at 1182 to 1465; that stretch reads NPLRRLCHYI…IFVALIIITF (284 aa). A helical membrane pass occupies residues 1191–1214; the sequence is ILNLRYFEMCILMVIAMSSIALAA. Over 1215–1231 the chain is Extracellular; the sequence is EDPVQPNAPRNNVLRYF. A helical transmembrane segment spans residues 1232 to 1251; it reads DYVFTGVFTFEMVIKMIDLG. The Cytoplasmic portion of the chain corresponds to 1252–1258; sequence LVLHQGA. Residues 1259-1282 traverse the membrane as a helical segment; it reads YFRDLWNILDFIVVSGALVAFAFT. Over 1283 to 1293 the chain is Extracellular; the sequence is GNSKGKDINTI. A helical transmembrane segment spans residues 1294–1311; that stretch reads KSLRVLRVLRPLKTIKRL. The Cytoplasmic portion of the chain corresponds to 1312–1330; that stretch reads PKLKAVFDCVVNSLKNVFN. The helical transmembrane segment at 1331–1350 threads the bilayer; sequence ILIVYMLFMFIFAVVAVQLF. Residues 1351 to 1437 lie on the Extracellular side of the membrane; the sequence is KGKFFHCTDE…QGPSPGYRME (87 aa). A Ca(2+)-binding site is contributed by E1411. A helical membrane pass occupies residues 1438–1462; it reads MSIFYVVYFVVFPFFFVNIFVALII. The Cytoplasmic segment spans residues 1463-1518; the sequence is ITFQEQGDKMMEEYSLEKNERACIDFAISAKPLTRHMPQNKQSFQYRMWQFVVSPP. An IV repeat occupies 1502–1765; that stretch reads NKQSFQYRMW…LFVAVIMDNF (264 aa). Residues 1519–1537 form a helical membrane-spanning segment; sequence FEYTIMAMIALNTIVLMMK. Residues 1538–1551 lie on the Extracellular side of the membrane; that stretch reads FYGASVAYENALRV. Residues 1552-1573 form a helical membrane-spanning segment; that stretch reads FNIVFTSLFSLECVLKVMAFGI. At 1574 to 1580 the chain is on the cytoplasmic side; the sequence is LNYFRDA. The chain crosses the membrane as a helical span at residues 1581 to 1600; the sequence is WNIFDFVTVLGSITDILVTE. The Extracellular segment spans residues 1601 to 1607; it reads FGNNFIN. N1607 carries an N-linked (GlcNAc...) asparagine glycan. The helical transmembrane segment at 1608 to 1626 threads the bilayer; it reads LSFLRLFRAARLIKLLRQG. Residues 1627–1645 lie on the Cytoplasmic side of the membrane; that stretch reads YTIRILLWTFVQSFKALPY. A helical membrane pass occupies residues 1646–1665; that stretch reads VCLLIAMLFFIYAIIGMQVF. Residues 1666–1737 are Extracellular-facing; sequence GNIGIDGEDE…IQKPECGNEF (72 aa). The helical transmembrane segment at 1738 to 1763 threads the bilayer; sequence AYFYFVSFIFLCSFLMLNLFVAVIMD. Topologically, residues 1764–2212 are cytoplasmic; sequence NFEYLTRDSS…EGREHATHRQ (449 aa). T1935 carries the post-translational modification Phosphothreonine. Residues 1940–2212 form a disordered region; the sequence is QRMEPPSPTQ…EGREHATHRQ (273 aa). 2 stretches are compositionally biased toward polar residues: residues 1948–1963 and 1972–1997; these read TQEGGPSQNALPSTQL and QESSMKESPSWVTQRAQEMFQKTGTW. Phosphoserine is present on residues S1998, S2016, S2028, S2030, S2071, and S2091. Polar residues predominate over residues 2008–2017; it reads PNSQPNSQSV. The segment covering 2018–2034 has biased composition (basic and acidic residues); it reads EMREMGTDGYSDSEHYL. Residues 2064-2073 show a composition bias toward polar residues; that stretch reads LSTISDTSPM. Basic and acidic residues-rich tracts occupy residues 2085–2102 and 2143–2153; these read RRLDDYSLERVPPEENQR and PSKDRDQDRGR. The span at 2154–2172 shows a compositional bias: basic residues; the sequence is PKDRKHRPHHHHHHHHHHP. Basic and acidic residues predominate over residues 2173–2212; sequence PAPDRERYAQERPDTGRARAREQRWSRSPSEGREHATHRQ.

This sequence belongs to the calcium channel alpha-1 subunit (TC 1.A.1.11) family. CACNA1A subfamily. Voltage-dependent calcium channels are multisubunit complexes, consisting of alpha-1, alpha-2, beta and delta subunits in a 1:1:1:1 ratio. The channel activity is directed by the pore-forming and voltage-sensitive alpha-1 subunit. In many cases, this subunit is sufficient to generate voltage-sensitive calcium channel activity. The auxiliary subunits beta and alpha-2/delta linked by a disulfide bridge regulate the channel activity. Interacts (via C-terminal CDB motif) with CABP1 in the pre- and postsynaptic membranes. Interacts with the spider omega-agatoxin-IVA (AC P30288). Interacts with TSPOAP1. In terms of tissue distribution, brain specific. Purkinje cells contain predominantly P-type VSCC, the Q-type being a prominent calcium current in cerebellar granule cells. Also found in heart, in kidney distal convoluted tubule (DCT), and in pituitary.

Its subcellular location is the cell membrane. It catalyses the reaction Ca(2+)(in) = Ca(2+)(out). Its function is as follows. Voltage-sensitive calcium channels (VSCC) mediate the entry of calcium ions into excitable cells and are also involved in a variety of calcium-dependent processes, including muscle contraction, hormone or neurotransmitter release, gene expression, cell motility, cell division and cell death. The isoform alpha-1A gives rise to P and/or Q-type calcium currents. P/Q-type calcium channels belong to the 'high-voltage activated' (HVA) group and are specifically blocked by the spider omega-agatoxin-IVA (AC P30288). They are however insensitive to dihydropyridines (DHP). The protein is Voltage-dependent P/Q-type calcium channel subunit alpha-1A of Rattus norvegicus (Rat).